Consider the following 649-residue polypeptide: Serine/threonine-protein kinase par-4 (649 aa).

Residues 1 to 11 are compositionally biased toward polar residues; that stretch reads MEGPSSSSVPT. A disordered region spans residues 1–132; that stretch reads MEGPSSSSVP…DEEAETPEEQ (132 aa). The segment covering 45–55 has biased composition (basic and acidic residues); sequence NTEKMEKEKKP. Acidic residues-rich tracts occupy residues 64 to 77 and 117 to 129; these read PDYDYDEEDGGSCE and DDMEDDDEEAETP. Residues 197–460 enclose the Protein kinase domain; sequence YLWGGIIGTG…ISDVMQHPWF (264 aa). ATP is bound by residues 203-211 and Lys226; that span reads IGTGSYGKV. The Proton acceptor role is filled by Asp324. Positions 548 to 649 are disordered; sequence TLEKRPGDGP…CIFRSRTDSS (102 aa). Positions 597–609 are enriched in low complexity; the sequence is AVEVVEAVAAPEA.

This sequence belongs to the protein kinase superfamily. CAMK Ser/Thr protein kinase family. LKB1 subfamily. Mg(2+) is required as a cofactor. Mn(2+) serves as cofactor.

Its subcellular location is the cytoplasm. It localises to the cell cortex. The catalysed reaction is L-seryl-[protein] + ATP = O-phospho-L-seryl-[protein] + ADP + H(+). The enzyme catalyses L-threonyl-[protein] + ATP = O-phospho-L-threonyl-[protein] + ADP + H(+). Its function is as follows. Required for cytoplasmic partitioning and asymmetric cell division in early embryogenesis. Phosphorylates and restricts the asymmetry effectors mex-5 and mex-6 to the anterior cytoplasm of the zygote and maintains these phosphorylations until fertilization. Phosphorylates and regulates aak-2 in response to oxidative stress. May also play a role in motility, behavioral response, regulation of lifespan and dauer formation through this pathway. The protein is Serine/threonine-protein kinase par-4 of Caenorhabditis briggsae.